We begin with the raw amino-acid sequence, 366 residues long: Chorismate synthase (366 aa).

Residues Arg48 and Arg54 each contribute to the NADP(+) site. FMN contacts are provided by residues 125–127, 238–239, Gly278, 293–297, and Arg319; these read RSS, NA, and KPTSS.

This sequence belongs to the chorismate synthase family. In terms of assembly, homotetramer. The cofactor is FMNH2.

The enzyme catalyses 5-O-(1-carboxyvinyl)-3-phosphoshikimate = chorismate + phosphate. It functions in the pathway metabolic intermediate biosynthesis; chorismate biosynthesis; chorismate from D-erythrose 4-phosphate and phosphoenolpyruvate: step 7/7. Catalyzes the anti-1,4-elimination of the C-3 phosphate and the C-6 proR hydrogen from 5-enolpyruvylshikimate-3-phosphate (EPSP) to yield chorismate, which is the branch point compound that serves as the starting substrate for the three terminal pathways of aromatic amino acid biosynthesis. This reaction introduces a second double bond into the aromatic ring system. This chain is Chorismate synthase, found in Neisseria meningitidis serogroup C / serotype 2a (strain ATCC 700532 / DSM 15464 / FAM18).